We begin with the raw amino-acid sequence, 662 residues long: Interleukin-12 receptor subunit beta-1 (662 aa).

A signal peptide spans 1 to 23 (MEPLVTWVVPLLFLFLLSRQGAA). Topologically, residues 24 to 545 (CRTSECCFQD…RFSIEVQVSD (522 aa)) are extracellular. 5 Fibronectin type-III domains span residues 46-136 (GPRD…LYNS), 142-234 (PLGD…VPPE), 237-337 (PQPQ…IPAD), 338-444 (THTE…GNAS), and 448-542 (TPHH…IEVQ). Residues C52 and C62 are joined by a disulfide bond. N-linked (GlcNAc...) asparagine glycosylation is present at N121. The WSXWS motif signature appears at 222–226 (WSKWS). N-linked (GlcNAc...) asparagine glycosylation is found at N329, N346, N352, N442, and N456. The helical transmembrane segment at 546 to 570 (WLIFFASLGSFLSILLVGVLGYLGL) threads the bilayer. The Cytoplasmic segment spans residues 571 to 662 (NRAARHLCPP…EDGDRCKAKM (92 aa)). A Box 1 motif motif is present at residues 577–585 (LCPPLPTPC). The span at 626–637 (GERTEPLEKTEL) shows a compositional bias: basic and acidic residues. The disordered stretch occupies residues 626 to 648 (GERTEPLEKTELPEGAPELALDT).

Belongs to the type I cytokine receptor family. Type 2 subfamily. As to quaternary structure, dimer or oligomer; disulfide-linked. Interacts with IL12RB2 to form the high affinity IL12 receptor. Heterodimer with IL23R; in presence of IL23. The heterodimer forms the IL23 receptor.

Its subcellular location is the membrane. Its function is as follows. Functions as an interleukin receptor which binds interleukin-12 with low affinity and is involved in IL12 transduction. Associated with IL12RB2 it forms a functional, high affinity receptor for IL12. Also associates with IL23R to form the interleukin-23 receptor which functions in IL23 signal transduction probably through activation of the Jak-Stat signaling cascade. This chain is Interleukin-12 receptor subunit beta-1 (IL12RB1), found in Homo sapiens (Human).